Reading from the N-terminus, the 57-residue chain is MSAKCPICAKPVDSAFRPFCSKRCADVDLQRWLSGRYVVAGGDDDEENPPSQDINRE.

Zn(2+)-binding residues include Cys5, Cys8, Cys20, and Cys24.

The protein belongs to the DNA gyrase inhibitor YacG family. Interacts with GyrB. The cofactor is Zn(2+).

Inhibits all the catalytic activities of DNA gyrase by preventing its interaction with DNA. Acts by binding directly to the C-terminal domain of GyrB, which probably disrupts DNA binding by the gyrase. This Caulobacter vibrioides (strain ATCC 19089 / CIP 103742 / CB 15) (Caulobacter crescentus) protein is DNA gyrase inhibitor YacG.